The following is a 460-amino-acid chain: MRAWEEFLLLQEKEIGTNTVDKWLRSLKVLCFDACNLYLEAQDSFQITWFEEHIRHKVKSGLVNNNNKPIRVHVTSVDKAAPFYKEKQMQQEKTAYFTMHYGSVNPEMTFSNFLVTPENDLPFRVLQEFTKSPDENGGVTFNPIYLFGPEGSGKTHLMQSAISVLRESGGKILYVSSDLFTEHLVSAIRSGEMQKFRSFYRNIDALFIEDIEVFSGKSATQEEFFHTFNSLHSEGKLIVVSSSYAPVDLVAVEDRLISRFEWGVAIPIHPLVQEGLRSFLMRQVERLSIRIQETALDFLIYALSSNVKTLLHALNLLAKRVMYKKLSHQLLYEDDVKTLLKDVLEAAGSVRLTPLKIIRNVAQYYGVSQESILGRSQSREYVLPRQVAMYFCRQKLSLSYVRIGDVFSRDHSTVISSIRLIEQKIEENSHDIHMAIQDISKNLNSLHKSLEFFPSEEMII.

The interval 1-68 (MRAWEEFLLL…KSGLVNNNNK (68 aa)) is domain I, interacts with DnaA modulators. The interval 68 to 102 (KPIRVHVTSVDKAAPFYKEKQMQQEKTAYFTMHYG) is domain II. A domain III, AAA+ region region spans residues 103–321 (SVNPEMTFSN…HALNLLAKRV (219 aa)). Positions 151, 153, 154, and 155 each coordinate ATP. Residues 322 to 460 (MYKKLSHQLL…EFFPSEEMII (139 aa)) are domain IV, binds dsDNA.

This sequence belongs to the DnaA family. Oligomerizes as a right-handed, spiral filament on DNA at oriC.

Its subcellular location is the cytoplasm. Its function is as follows. Plays an essential role in the initiation and regulation of chromosomal replication. ATP-DnaA binds to the origin of replication (oriC) to initiate formation of the DNA replication initiation complex once per cell cycle. Binds the DnaA box (a 9 base pair repeat at the origin) and separates the double-stranded (ds)DNA. Forms a right-handed helical filament on oriC DNA; dsDNA binds to the exterior of the filament while single-stranded (ss)DNA is stabiized in the filament's interior. The ATP-DnaA-oriC complex binds and stabilizes one strand of the AT-rich DNA unwinding element (DUE), permitting loading of DNA polymerase. After initiation quickly degrades to an ADP-DnaA complex that is not apt for DNA replication. Binds acidic phospholipids. The protein is Chromosomal replication initiator protein DnaA 1 of Chlamydia pneumoniae (Chlamydophila pneumoniae).